The chain runs to 48 residues: Fimbrial assembly protein, serogroup A1 (48 aa).

This is Fimbrial assembly protein, serogroup A1 (fimB) from Dichelobacter nodosus (Bacteroides nodosus).